A 140-amino-acid polypeptide reads, in one-letter code: Nucleoside diphosphate kinase (140 aa).

ATP contacts are provided by Lys11, Phe59, Arg87, Thr93, Arg104, and Asn114. His117 serves as the catalytic Pros-phosphohistidine intermediate.

The protein belongs to the NDK family. Homotetramer. The cofactor is Mg(2+).

The protein resides in the cytoplasm. The enzyme catalyses a 2'-deoxyribonucleoside 5'-diphosphate + ATP = a 2'-deoxyribonucleoside 5'-triphosphate + ADP. It catalyses the reaction a ribonucleoside 5'-diphosphate + ATP = a ribonucleoside 5'-triphosphate + ADP. Major role in the synthesis of nucleoside triphosphates other than ATP. The ATP gamma phosphate is transferred to the NDP beta phosphate via a ping-pong mechanism, using a phosphorylated active-site intermediate. In Rhizobium etli (strain ATCC 51251 / DSM 11541 / JCM 21823 / NBRC 15573 / CFN 42), this protein is Nucleoside diphosphate kinase.